Here is a 319-residue protein sequence, read N- to C-terminus: Beta-ketoacyl-[acyl-carrier-protein] synthase III (319 aa).

Residues Cys115 and His246 contribute to the active site. An ACP-binding region spans residues 247–251; the sequence is QANLR. Asn276 is a catalytic residue.

The protein belongs to the thiolase-like superfamily. FabH family. As to quaternary structure, homodimer.

The protein localises to the cytoplasm. The catalysed reaction is malonyl-[ACP] + acetyl-CoA + H(+) = 3-oxobutanoyl-[ACP] + CO2 + CoA. The protein operates within lipid metabolism; fatty acid biosynthesis. Its function is as follows. Catalyzes the condensation reaction of fatty acid synthesis by the addition to an acyl acceptor of two carbons from malonyl-ACP. Catalyzes the first condensation reaction which initiates fatty acid synthesis and may therefore play a role in governing the total rate of fatty acid production. Possesses both acetoacetyl-ACP synthase and acetyl transacylase activities. Its substrate specificity determines the biosynthesis of branched-chain and/or straight-chain of fatty acids. In Coxiella burnetii (strain Dugway 5J108-111), this protein is Beta-ketoacyl-[acyl-carrier-protein] synthase III.